Reading from the N-terminus, the 122-residue chain is Large ribosomal subunit protein uL14 (122 aa).

It belongs to the universal ribosomal protein uL14 family. Part of the 50S ribosomal subunit. Forms a cluster with proteins L3 and L19. In the 70S ribosome, L14 and L19 interact and together make contacts with the 16S rRNA in bridges B5 and B8.

Functionally, binds to 23S rRNA. Forms part of two intersubunit bridges in the 70S ribosome. The sequence is that of Large ribosomal subunit protein uL14 from Oleidesulfovibrio alaskensis (strain ATCC BAA-1058 / DSM 17464 / G20) (Desulfovibrio alaskensis).